A 264-amino-acid polypeptide reads, in one-letter code: uncharacterized protein (264 aa).

A signal peptide spans M1 to A23.

This is an uncharacterized protein from Shewanella oneidensis (strain ATCC 700550 / JCM 31522 / CIP 106686 / LMG 19005 / NCIMB 14063 / MR-1).